Consider the following 619-residue polypeptide: Zinc finger and BTB domain-containing protein 7C (619 aa).

The 68-residue stretch at 34–101 (CDVLLVVQEQ…AYTSTLTITA (68 aa)) folds into the BTB domain. The interval 129–218 (PGGDGGEEDD…DSFQAGSPGH (90 aa)) is disordered. The segment covering 133–173 (GGEEDDKEDDDDDEDDDDEEDEEEEEEEEEDDDDDTEDFAD) has biased composition (acidic residues). Positions 191 to 208 (KTDHLTEKAYSDTPRDFP) are enriched in basic and acidic residues. C2H2-type zinc fingers lie at residues 364–386 (QQCPICHKVIMGAGKLPRHMRTH), 392–414 (YMCTICEVRFTRQDKLKIHMRKH), and 420–442 (YLCIHCNAKFVHNYDLKNHMRIH). The segment at 448 to 478 (YQCEFCYKSFTRSDHLHRHIKRQSCRMARPR) adopts a C2H2-type 4; degenerate zinc-finger fold.

Detected in normal cervical keratinocytes, and in some cervical carcinoma cell lines.

Its function is as follows. May be a tumor suppressor gene. This is Zinc finger and BTB domain-containing protein 7C (ZBTB7C) from Homo sapiens (Human).